The chain runs to 189 residues: Large ribosomal subunit protein uL5 (189 aa).

Belongs to the universal ribosomal protein uL5 family. As to quaternary structure, part of the 50S ribosomal subunit; part of the 5S rRNA/L5/L18/L25 subcomplex. Contacts the 5S rRNA and the P site tRNA. Forms a bridge to the 30S subunit in the 70S ribosome.

In terms of biological role, this is one of the proteins that bind and probably mediate the attachment of the 5S RNA into the large ribosomal subunit, where it forms part of the central protuberance. In the 70S ribosome it contacts protein S13 of the 30S subunit (bridge B1b), connecting the 2 subunits; this bridge is implicated in subunit movement. Contacts the P site tRNA; the 5S rRNA and some of its associated proteins might help stabilize positioning of ribosome-bound tRNAs. In Kocuria rhizophila (strain ATCC 9341 / DSM 348 / NBRC 103217 / DC2201), this protein is Large ribosomal subunit protein uL5.